The primary structure comprises 696 residues: Elongation factor G (696 aa).

The 281-residue stretch at 8-288 (EDYRNFGIMA…AVVEYLPSPA (281 aa)) folds into the tr-type G domain. Residues 17-24 (AHIDAGKT), 86-90 (DTPGH), and 140-143 (NKMD) each bind GTP.

Belongs to the TRAFAC class translation factor GTPase superfamily. Classic translation factor GTPase family. EF-G/EF-2 subfamily.

The protein resides in the cytoplasm. Its function is as follows. Catalyzes the GTP-dependent ribosomal translocation step during translation elongation. During this step, the ribosome changes from the pre-translocational (PRE) to the post-translocational (POST) state as the newly formed A-site-bound peptidyl-tRNA and P-site-bound deacylated tRNA move to the P and E sites, respectively. Catalyzes the coordinated movement of the two tRNA molecules, the mRNA and conformational changes in the ribosome. The polypeptide is Elongation factor G (Mesorhizobium japonicum (strain LMG 29417 / CECT 9101 / MAFF 303099) (Mesorhizobium loti (strain MAFF 303099))).